The sequence spans 78 residues: Small ribosomal subunit protein uS19m (78 aa).

The protein belongs to the universal ribosomal protein uS19 family.

It is found in the mitochondrion. In Acanthamoeba castellanii (Amoeba), this protein is Small ribosomal subunit protein uS19m (RPS19).